Reading from the N-terminus, the 375-residue chain is 5-amino-6-(D-ribitylamino)uracil--L-tyrosine 4-hydroxyphenyl transferase 1 (375 aa).

The region spanning V50–H284 is the Radical SAM core domain. Residues C64, C68, and C71 each coordinate [4Fe-4S] cluster.

Belongs to the radical SAM superfamily. CofH family. In terms of assembly, consists of two subunits, CofG and CofH. The cofactor is [4Fe-4S] cluster.

The catalysed reaction is 5-amino-6-(D-ribitylamino)uracil + L-tyrosine + S-adenosyl-L-methionine = 5-amino-5-(4-hydroxybenzyl)-6-(D-ribitylimino)-5,6-dihydrouracil + 2-iminoacetate + 5'-deoxyadenosine + L-methionine + H(+). It participates in cofactor biosynthesis; coenzyme F0 biosynthesis. In terms of biological role, catalyzes the radical-mediated synthesis of 5-amino-5-(4-hydroxybenzyl)-6-(D-ribitylimino)-5,6-dihydrouracil from 5-amino-6-(D-ribitylamino)uracil and L-tyrosine. This chain is 5-amino-6-(D-ribitylamino)uracil--L-tyrosine 4-hydroxyphenyl transferase 1, found in Methanosarcina acetivorans (strain ATCC 35395 / DSM 2834 / JCM 12185 / C2A).